A 72-amino-acid polypeptide reads, in one-letter code: Sperm protein associated with the nucleus on the X chromosome N1 (72 aa).

The disordered stretch occupies residues 1–40 (MEKPTSSTNGEKRKSPCDSNNKNDEMQETPNRDLVLEPSL). Residues 10–35 (GEKRKSPCDSNNKNDEMQETPNRDLV) show a composition bias toward basic and acidic residues.

This sequence belongs to the SPAN-X family.

The protein is Sperm protein associated with the nucleus on the X chromosome N1 (SPANXN1) of Gorilla gorilla gorilla (Western lowland gorilla).